The following is a 233-amino-acid chain: V-type proton ATPase subunit E (233 aa).

This sequence belongs to the V-ATPase E subunit family. V-ATPase is a heteromultimeric enzyme composed of a peripheral catalytic V1 complex (components A to H) attached to an integral membrane V0 proton pore complex (components: a, c, c', c'' and d).

In terms of biological role, subunit of the peripheral V1 complex of vacuolar ATPase essential for assembly or catalytic function. V-ATPase is responsible for acidifying a variety of intracellular compartments in eukaryotic cells. The chain is V-type proton ATPase subunit E (vatE) from Dictyostelium discoideum (Social amoeba).